A 152-amino-acid polypeptide reads, in one-letter code: Nucleoside diphosphate kinase A (152 aa).

Lys-12, Phe-60, Arg-88, and Thr-94 together coordinate ATP. Lys-100 participates in a covalent cross-link: Glycyl lysine isopeptide (Lys-Gly) (interchain with G-Cter in ubiquitin). ATP is bound by residues Arg-105 and Asn-115. The active-site Pros-phosphohistidine intermediate is His-118. Residues Ser-120 and Ser-122 each carry the phosphoserine modification. Lys-124 carries the N6-acetyllysine modification. At Ser-125 the chain carries Phosphoserine.

The protein belongs to the NDK family. Hexamer of two different chains: An and B (A6, A5B, A4B2, A3B3, A2B4, AB5, B6). Interacts with PRUNE1. Component of the SET complex, composed of at least ANP32A, APEX1, HMGB2, NME1, SET and TREX1. Within this complex, interacts directly with SET. Also interacts with TREX1, but only following translocation to the nucleus. Mg(2+) is required as a cofactor.

It is found in the cytoplasm. It localises to the nucleus. The enzyme catalyses a 2'-deoxyribonucleoside 5'-diphosphate + ATP = a 2'-deoxyribonucleoside 5'-triphosphate + ADP. It carries out the reaction a ribonucleoside 5'-diphosphate + ATP = a ribonucleoside 5'-triphosphate + ADP. Autophosphorylation at His-118 increases serine/threonine protein kinase activity of the enzyme. Interaction with the SET complex inhibits exonuclease activity. Its function is as follows. Major role in the synthesis of nucleoside triphosphates other than ATP. The ATP gamma phosphate is transferred to the NDP beta phosphate via a ping-pong mechanism, using a phosphorylated active-site intermediate. Possesses nucleoside-diphosphate kinase, serine/threonine-specific protein kinase, geranyl and farnesyl pyrophosphate kinase, histidine protein kinase and 3'-5' exonuclease activities. Involved in cell proliferation, differentiation and development, signal transduction, G protein-coupled receptor endocytosis, and gene expression. Required for neural development including neural patterning and cell fate determination. During GZMA-mediated cell death, works in concert with TREX1. NME1 nicks one strand of DNA and TREX1 removes bases from the free 3' end to enhance DNA damage and prevent DNA end reannealing and rapid repair. The polypeptide is Nucleoside diphosphate kinase A (Nme1) (Mus musculus (Mouse)).